The following is a 399-amino-acid chain: Elongation factor Tu (399 aa).

In terms of domain architecture, tr-type G spans 10 to 209 (KPHVNIGTIG…KVDEYIPTPV (200 aa)). Residues 19–26 (GHVDHGKT) form a G1 region. 19 to 26 (GHVDHGKT) contacts GTP. Threonine 26 lines the Mg(2+) pocket. A G2 region spans residues 60-64 (GITIA). The tract at residues 81–84 (DCPG) is G3. GTP is bound by residues 81–85 (DCPGH) and 136–139 (NKAD). The segment at 136-139 (NKAD) is G4. The G5 stretch occupies residues 174–176 (SAL).

It belongs to the TRAFAC class translation factor GTPase superfamily. Classic translation factor GTPase family. EF-Tu/EF-1A subfamily. As to quaternary structure, monomer.

Its subcellular location is the cytoplasm. The enzyme catalyses GTP + H2O = GDP + phosphate + H(+). Functionally, GTP hydrolase that promotes the GTP-dependent binding of aminoacyl-tRNA to the A-site of ribosomes during protein biosynthesis. In Campylobacter curvus (strain 525.92), this protein is Elongation factor Tu.